The primary structure comprises 478 residues: UDP-N-acetylmuramate--L-alanine ligase (478 aa).

Residue 122–128 (GTHGKTT) participates in ATP binding.

It belongs to the MurCDEF family.

It localises to the cytoplasm. It catalyses the reaction UDP-N-acetyl-alpha-D-muramate + L-alanine + ATP = UDP-N-acetyl-alpha-D-muramoyl-L-alanine + ADP + phosphate + H(+). The protein operates within cell wall biogenesis; peptidoglycan biosynthesis. Cell wall formation. This is UDP-N-acetylmuramate--L-alanine ligase from Stenotrophomonas maltophilia (strain K279a).